The sequence spans 318 residues: ZAR1-like protein (318 aa).

The interval 149–211 (LSDPPEAGQP…PVDSSQPLGR (63 aa)) is disordered. Residues 155–169 (AGQPPPPLPPPSPPP) are compositionally biased toward pro residues. A 3CxxC-type zinc finger spans residues 219–304 (PKYGYFHCKD…QELCGRCKDK (86 aa)).

Belongs to the ZAR1 family. In terms of assembly, interacts with YBX2.

The protein localises to the cytoplasm. The protein resides in the cytoplasmic ribonucleoprotein granule. In terms of biological role, mRNA-binding protein required for maternal mRNA storage, translation and degradation during oocyte maturation. Probably promotes formation of some phase-separated membraneless compartment that stores maternal mRNAs in oocytes: acts by undergoing liquid-liquid phase separation upon binding to maternal mRNAs. Binds to the 3'-UTR of maternal mRNAs, inhibiting their translation. This Bos taurus (Bovine) protein is ZAR1-like protein (ZAR1L).